The primary structure comprises 156 residues: AP-1 complex subunit sigma-1 (156 aa).

It belongs to the adaptor complexes small subunit family. Adapter protein complex 1 (AP-1) is a heterotetramer composed of two large adaptins (gamma-type subunit APL4 and beta-type subunit APL2), a medium adaptin (mu-type subunit APM1) and a small adaptin (sigma-type subunit APS1). AP-1 interacts with clathrin. Also a component of the AP-1R complex composed of at least APM2, APL4 and APS1.

Its subcellular location is the cytoplasm. It localises to the nucleus. It is found in the cytoplasmic vesicle. The protein resides in the clathrin-coated vesicle membrane. The protein localises to the endosome. Its subcellular location is the golgi apparatus. Functionally, component of the adapter complexes which link clathrin to receptors in coated vesicles. Clathrin-associated protein complexes are believed to interact with the cytoplasmic tails of membrane proteins, leading to their selection and concentration. AP19 is probably a subunit of the Golgi membrane adapter. Component of the AP-1-related (AP-1R) complex, an adapter protein complex that mediates sorting of cargo SNARE SNC1. In contrast to the APM1-containing AP-1 complex, AP-1R is incapable of sorting CHS3. This chain is AP-1 complex subunit sigma-1 (APS1), found in Saccharomyces cerevisiae (strain ATCC 204508 / S288c) (Baker's yeast).